Reading from the N-terminus, the 294-residue chain is N-acetylmuramic acid 6-phosphate etherase (294 aa).

Positions 56-219 (TSYSLRNGGR…STLSMVSVGK (164 aa)) constitute an SIS domain. Residue Glu84 is the Proton donor of the active site. The active site involves Glu115.

Belongs to the GCKR-like family. MurNAc-6-P etherase subfamily. Homodimer.

It catalyses the reaction N-acetyl-D-muramate 6-phosphate + H2O = N-acetyl-D-glucosamine 6-phosphate + (R)-lactate. It participates in amino-sugar metabolism; 1,6-anhydro-N-acetylmuramate degradation. It functions in the pathway amino-sugar metabolism; N-acetylmuramate degradation. Its pathway is cell wall biogenesis; peptidoglycan recycling. Its function is as follows. Specifically catalyzes the cleavage of the D-lactyl ether substituent of MurNAc 6-phosphate, producing GlcNAc 6-phosphate and D-lactate. Together with AnmK, is also required for the utilization of anhydro-N-acetylmuramic acid (anhMurNAc) either imported from the medium or derived from its own cell wall murein, and thus plays a role in cell wall recycling. The chain is N-acetylmuramic acid 6-phosphate etherase from Francisella tularensis subsp. holarctica (strain LVS).